Here is a 989-residue protein sequence, read N- to C-terminus: Putative transcription elongation factor SPT5 homolog 2 (989 aa).

A compositionally biased stretch (acidic residues) spans 1 to 26 (MSQYSDDDYSHEDDSEMEDEDEEDEY). Positions 1–82 (MSQYSDDDYS…VEDDDDDVDV (82 aa)) are disordered. Over residues 31–42 (SRKGRSGKKRGR) the composition is skewed to basic residues. The segment covering 65 to 82 (WEVEVDDDVEDDDDDVDV) has biased composition (acidic residues). KOW domains are found at residues 260–287 (DLSR…VDNV), 412–439 (HFMK…VDEE), 464–491 (YFEP…VDQH), 588–615 (VVAV…IYKG), and 683–710 (DHLV…VKDK). Positions 790 to 852 (MSPPRDNWED…SPMTPSSTSY (63 aa)) are disordered. Positions 842 to 852 (PSPMTPSSTSY) are enriched in low complexity. One can recognise a KOW 6 domain in the interval 936–963 (CPKKNERVKILGGKYCGSTAKVIGEDGQ).

It belongs to the SPT5 family.

It localises to the nucleus. Its function is as follows. May regulate transcription elongation by RNA polymerase II. May enhance transcriptional pausing at sites proximal to the promoter, which may in turn facilitate the assembly of an elongation competent RNA polymerase II complex. The sequence is that of Putative transcription elongation factor SPT5 homolog 2 from Arabidopsis thaliana (Mouse-ear cress).